Here is an 88-residue protein sequence, read N- to C-terminus: Small ribosomal subunit protein uS15 (88 aa).

It belongs to the universal ribosomal protein uS15 family. Part of the 30S ribosomal subunit. Forms a bridge to the 50S subunit in the 70S ribosome, contacting the 23S rRNA.

In terms of biological role, one of the primary rRNA binding proteins, it binds directly to 16S rRNA where it helps nucleate assembly of the platform of the 30S subunit by binding and bridging several RNA helices of the 16S rRNA. Forms an intersubunit bridge (bridge B4) with the 23S rRNA of the 50S subunit in the ribosome. This is Small ribosomal subunit protein uS15 from Finegoldia magna (strain ATCC 29328 / DSM 20472 / WAL 2508) (Peptostreptococcus magnus).